We begin with the raw amino-acid sequence, 194 residues long: Xanthine phosphoribosyltransferase (194 aa).

2 residues coordinate xanthine: leucine 20 and asparagine 27. 128 to 132 (ANGQA) lines the 5-phospho-alpha-D-ribose 1-diphosphate pocket. Xanthine is bound at residue lysine 156.

Belongs to the purine/pyrimidine phosphoribosyltransferase family. Xpt subfamily. As to quaternary structure, homodimer.

It is found in the cytoplasm. It catalyses the reaction XMP + diphosphate = xanthine + 5-phospho-alpha-D-ribose 1-diphosphate. The protein operates within purine metabolism; XMP biosynthesis via salvage pathway; XMP from xanthine: step 1/1. Functionally, converts the preformed base xanthine, a product of nucleic acid breakdown, to xanthosine 5'-monophosphate (XMP), so it can be reused for RNA or DNA synthesis. The sequence is that of Xanthine phosphoribosyltransferase from Geobacillus thermodenitrificans (strain NG80-2).